The following is an 854-amino-acid chain: DNA mismatch repair protein MutS (854 aa).

614-621 (GPNMGGKS) provides a ligand contact to ATP.

It belongs to the DNA mismatch repair MutS family.

This protein is involved in the repair of mismatches in DNA. It is possible that it carries out the mismatch recognition step. This protein has a weak ATPase activity. This Sodalis glossinidius (strain morsitans) protein is DNA mismatch repair protein MutS.